A 124-amino-acid chain; its full sequence is CD59 glycoprotein (124 aa).

Positions 1–24 (MTSRGVHLLLRLLFLLAVFYSSDS) are cleaved as a signal peptide. Residues 25–101 (SLMCYHCLLP…DLCNGPEDDG (77 aa)) form the UPAR/Ly6 domain. 5 disulfide bridges follow: cysteine 28/cysteine 51, cysteine 31/cysteine 38, cysteine 44/cysteine 64, cysteine 70/cysteine 88, and cysteine 89/cysteine 94. Asparagine 37 is a glycosylation site (N-linked (GlcNAc...) asparagine). A lipid anchor (GPI-anchor amidated glycine) is attached at glycine 101. A propeptide spans 102-124 (TALTGRTVLLVAPLLAAARNLCL) (removed in mature form).

As to quaternary structure, interacts with T-cell surface antigen CD2. Post-translationally, N- and O-glycosylated.

The protein resides in the cell membrane. It localises to the secreted. Potent inhibitor of the complement membrane attack complex (MAC) action, which protects self-cells from damage during complement activation. Acts by binding to the beta-haipins of C8 (C8A and C8B) components of the assembling MAC, forming an intermolecular beta-sheet that prevents incorporation of the multiple copies of C9 required for complete formation of the osmolytic pore. The polypeptide is CD59 glycoprotein (Oryctolagus cuniculus (Rabbit)).